A 209-amino-acid chain; its full sequence is Thiamine-phosphate synthase (209 aa).

4-amino-2-methyl-5-(diphosphooxymethyl)pyrimidine-binding positions include 36-40 (QLRDK) and asparagine 68. 2 residues coordinate Mg(2+): aspartate 69 and aspartate 88. Position 107 (serine 107) interacts with 4-amino-2-methyl-5-(diphosphooxymethyl)pyrimidine. 133-135 (TNS) is a 2-[(2R,5Z)-2-carboxy-4-methylthiazol-5(2H)-ylidene]ethyl phosphate binding site. Residue lysine 136 participates in 4-amino-2-methyl-5-(diphosphooxymethyl)pyrimidine binding. 2-[(2R,5Z)-2-carboxy-4-methylthiazol-5(2H)-ylidene]ethyl phosphate is bound by residues glycine 164 and 184–185 (IT).

This sequence belongs to the thiamine-phosphate synthase family. Mg(2+) serves as cofactor.

It catalyses the reaction 2-[(2R,5Z)-2-carboxy-4-methylthiazol-5(2H)-ylidene]ethyl phosphate + 4-amino-2-methyl-5-(diphosphooxymethyl)pyrimidine + 2 H(+) = thiamine phosphate + CO2 + diphosphate. It carries out the reaction 2-(2-carboxy-4-methylthiazol-5-yl)ethyl phosphate + 4-amino-2-methyl-5-(diphosphooxymethyl)pyrimidine + 2 H(+) = thiamine phosphate + CO2 + diphosphate. The catalysed reaction is 4-methyl-5-(2-phosphooxyethyl)-thiazole + 4-amino-2-methyl-5-(diphosphooxymethyl)pyrimidine + H(+) = thiamine phosphate + diphosphate. The protein operates within cofactor biosynthesis; thiamine diphosphate biosynthesis; thiamine phosphate from 4-amino-2-methyl-5-diphosphomethylpyrimidine and 4-methyl-5-(2-phosphoethyl)-thiazole: step 1/1. Condenses 4-methyl-5-(beta-hydroxyethyl)thiazole monophosphate (THZ-P) and 2-methyl-4-amino-5-hydroxymethyl pyrimidine pyrophosphate (HMP-PP) to form thiamine monophosphate (TMP). This chain is Thiamine-phosphate synthase, found in Shouchella clausii (strain KSM-K16) (Alkalihalobacillus clausii).